Consider the following 190-residue polypeptide: Protein GrpE (190 aa).

Positions methionine 1 to alanine 40 are disordered. The segment covering glycine 22–alanine 40 has biased composition (polar residues).

It belongs to the GrpE family. Homodimer.

The protein resides in the cytoplasm. Its function is as follows. Participates actively in the response to hyperosmotic and heat shock by preventing the aggregation of stress-denatured proteins, in association with DnaK and GrpE. It is the nucleotide exchange factor for DnaK and may function as a thermosensor. Unfolded proteins bind initially to DnaJ; upon interaction with the DnaJ-bound protein, DnaK hydrolyzes its bound ATP, resulting in the formation of a stable complex. GrpE releases ADP from DnaK; ATP binding to DnaK triggers the release of the substrate protein, thus completing the reaction cycle. Several rounds of ATP-dependent interactions between DnaJ, DnaK and GrpE are required for fully efficient folding. This is Protein GrpE from Pediococcus pentosaceus (strain ATCC 25745 / CCUG 21536 / LMG 10740 / 183-1w).